Reading from the N-terminus, the 266-residue chain is Ribosome-recycling factor, chloroplastic (266 aa).

Residues 1–26 (MPPLHAVSPAAAAAPPRALSSAARVP) are compositionally biased toward low complexity. Positions 1–30 (MPPLHAVSPAAAAAPPRALSSAARVPQRPG) are disordered. The transit peptide at 1–74 (MPPLHAVSPA…SDKRAVLRHA (74 aa)) directs the protein to the chloroplast. Coiled coils occupy residues 75 to 109 (TIEE…NTVR) and 207 to 266 (VAIR…LMKI).

It belongs to the RRF family.

The protein localises to the plastid. It localises to the chloroplast. Responsible for the release of ribosomes from messenger RNA at the termination of chloroplastic protein biosynthesis. The chain is Ribosome-recycling factor, chloroplastic from Oryza sativa subsp. indica (Rice).